We begin with the raw amino-acid sequence, 227 residues long: ATP-dependent dethiobiotin synthetase BioD (227 aa).

Residue 13–18 coordinates ATP; that stretch reads DIGKTY. Thr17 contributes to the Mg(2+) binding site. Residue Lys38 is part of the active site. Ser42 lines the substrate pocket. Residues Asp55, 116 to 119, and 179 to 180 each bind ATP; these read EGSG and NN. The Mg(2+) site is built by Asp55 and Glu116.

Belongs to the dethiobiotin synthetase family. Homodimer. Mg(2+) serves as cofactor.

The protein localises to the cytoplasm. It carries out the reaction (7R,8S)-7,8-diammoniononanoate + CO2 + ATP = (4R,5S)-dethiobiotin + ADP + phosphate + 3 H(+). Its pathway is cofactor biosynthesis; biotin biosynthesis; biotin from 7,8-diaminononanoate: step 1/2. Catalyzes a mechanistically unusual reaction, the ATP-dependent insertion of CO2 between the N7 and N8 nitrogen atoms of 7,8-diaminopelargonic acid (DAPA, also called 7,8-diammoniononanoate) to form a ureido ring. The chain is ATP-dependent dethiobiotin synthetase BioD from Clostridium botulinum (strain Langeland / NCTC 10281 / Type F).